Reading from the N-terminus, the 185-residue chain is Elongation factor P (185 aa).

The protein belongs to the elongation factor P family.

It localises to the cytoplasm. Its pathway is protein biosynthesis; polypeptide chain elongation. Functionally, involved in peptide bond synthesis. Stimulates efficient translation and peptide-bond synthesis on native or reconstituted 70S ribosomes in vitro. Probably functions indirectly by altering the affinity of the ribosome for aminoacyl-tRNA, thus increasing their reactivity as acceptors for peptidyl transferase. The polypeptide is Elongation factor P (Streptococcus equi subsp. zooepidemicus (strain MGCS10565)).